Consider the following 60-residue polypeptide: Metallothionein B (60 aa).

The beta stretch occupies residues M1 to C28. A divalent metal cation is bound by residues C4, C6, C12, C14, C18, C20, C23, C25, C28, C32, C33, C35, C36, C40, C43, C47, C49, C54, C58, and C59. The interval K29 to Q60 is alpha.

The protein belongs to the metallothionein superfamily. Type 1 family.

Its function is as follows. Metallothioneins have a high content of cysteine residues that bind various heavy metals. In Chionodraco hamatus (Antarctic teleost icefish), this protein is Metallothionein B (mtb).